A 269-amino-acid polypeptide reads, in one-letter code: MKVYPQVLSIAGSDSGGGAGIQADLKAFQTFGVFGTSVITCITAQNTQGVHGVYPLSVESVKAQILAIRDDFSIKAFKMGALCNAQIIECVANALETCDFGLCVLDPVMVAKNGALLLEEEAILSLKKRLLPKTNLLTPNLPEVYALTGVQARDDKSASKAMGVLRDLGVKNAVIKGGHTEHFQGEFSNDWVFLEDAEFILSAKRFNTKNTHGTGCTLSSLIVGLLAQGLDLKNAITKAKELLTIIIQNPLNIGHGHGPLNLWSIKKHV.

Residue Q45 participates in 4-amino-5-hydroxymethyl-2-methylpyrimidine binding.

It belongs to the ThiD family.

The enzyme catalyses 4-amino-5-hydroxymethyl-2-methylpyrimidine + ATP = 4-amino-2-methyl-5-(phosphooxymethyl)pyrimidine + ADP + H(+). It carries out the reaction 4-amino-2-methyl-5-(phosphooxymethyl)pyrimidine + ATP = 4-amino-2-methyl-5-(diphosphooxymethyl)pyrimidine + ADP. The protein operates within cofactor biosynthesis; thiamine diphosphate biosynthesis; 4-amino-2-methyl-5-diphosphomethylpyrimidine from 5-amino-1-(5-phospho-D-ribosyl)imidazole: step 2/3. It participates in cofactor biosynthesis; thiamine diphosphate biosynthesis; 4-amino-2-methyl-5-diphosphomethylpyrimidine from 5-amino-1-(5-phospho-D-ribosyl)imidazole: step 3/3. Catalyzes the phosphorylation of hydroxymethylpyrimidine phosphate (HMP-P) to HMP-PP, and of HMP to HMP-P. The protein is Hydroxymethylpyrimidine/phosphomethylpyrimidine kinase (thiD) of Helicobacter pylori (strain J99 / ATCC 700824) (Campylobacter pylori J99).